We begin with the raw amino-acid sequence, 385 residues long: Succinate--CoA ligase [ADP-forming] subunit beta (385 aa).

The ATP-grasp domain maps to 9–237; it reads KEILRQFGVN…LEAEHPLEIE (229 aa). ATP contacts are provided by residues lysine 45, 52-54, valine 94, and glutamate 101; that span reads GRG. Mg(2+)-binding residues include asparagine 192 and aspartate 206. Residues asparagine 257 and 314 to 316 each bind substrate; that span reads GIT.

This sequence belongs to the succinate/malate CoA ligase beta subunit family. Heterotetramer of two alpha and two beta subunits. Mg(2+) serves as cofactor.

It catalyses the reaction succinate + ATP + CoA = succinyl-CoA + ADP + phosphate. The enzyme catalyses GTP + succinate + CoA = succinyl-CoA + GDP + phosphate. It functions in the pathway carbohydrate metabolism; tricarboxylic acid cycle; succinate from succinyl-CoA (ligase route): step 1/1. Functionally, succinyl-CoA synthetase functions in the citric acid cycle (TCA), coupling the hydrolysis of succinyl-CoA to the synthesis of either ATP or GTP and thus represents the only step of substrate-level phosphorylation in the TCA. The beta subunit provides nucleotide specificity of the enzyme and binds the substrate succinate, while the binding sites for coenzyme A and phosphate are found in the alpha subunit. This chain is Succinate--CoA ligase [ADP-forming] subunit beta, found in Deinococcus deserti (strain DSM 17065 / CIP 109153 / LMG 22923 / VCD115).